Consider the following 631-residue polypeptide: ATP-dependent RNA helicase mrh4, mitochondrial (631 aa).

A mitochondrion-targeting transit peptide spans 1-39; it reads MYPLGRVSLPVRSPVCLFCQNRTSSLLPSAYVWQSARTM. Residues 55–111 form a disordered region; sequence PNVAKTSLKKKRNDTDRFGPFAGMNQTEARIRDDPRSRSPASLKRSKAPSDESGRKD. Basic and acidic residues predominate over residues 102 to 111; the sequence is APSDESGRKD. Positions 143 to 176 match the Q motif motif; it reads TSFDQFPLLPVVRHSIFSQALPGLHDVTPTPIQR. A disordered region spans residues 181–200; that stretch reads RLLDDTNKDKKPKKRAEGEP. A Helicase ATP-binding domain is found at 196–408; that stretch reads AEGEPEYDQY…RKKYPDIQRL (213 aa). 209-216 serves as a coordination point for ATP; it reads AETGSGKT. The DEAD box signature appears at 355–358; it reads DEAD. In terms of domain architecture, Helicase C-terminal spans 442–631; that stretch reads DVIWSIGKAG…EGMFRGQALI (190 aa).

Belongs to the DEAD box helicase family. MRH4 subfamily.

It localises to the mitochondrion. The catalysed reaction is ATP + H2O = ADP + phosphate + H(+). Functionally, ATP-binding RNA helicase involved in mitochondrial RNA metabolism. Required for maintenance of mitochondrial DNA. The chain is ATP-dependent RNA helicase mrh4, mitochondrial (mrh4) from Aspergillus terreus (strain NIH 2624 / FGSC A1156).